We begin with the raw amino-acid sequence, 117 residues long: MVSSATICSLLLLSMLWMDMAMAGSSFLSPEHQKAQQRKESKKPPAKLQPRALEGWLHPEDRGQAEEAEEELEIRFNAPFDVGIKLSGAQYQQHGRALGKFLQDILWEEVKEAPANK.

Positions 1–23 are cleaved as a signal peptide; that stretch reads MVSSATICSLLLLSMLWMDMAMA. Ser26 is lipidated: O-decanoyl serine; alternate. A lipid anchor (O-hexanoyl serine; alternate) is attached at Ser26. Ser26 carries O-octanoyl serine; alternate lipidation. Residues 28 to 68 form a disordered region; the sequence is LSPEHQKAQQRKESKKPPAKLQPRALEGWLHPEDRGQAEEA. Residues 31 to 43 are compositionally biased toward basic and acidic residues; it reads EHQKAQQRKESKK. The propeptide at 52–75 is removed in mature form; that stretch reads ALEGWLHPEDRGQAEEAEEELEIR. Leucine amide is present on Leu98. Positions 99–117 are cleaved as a propeptide — removed in mature form; that stretch reads GKFLQDILWEEVKEAPANK.

The protein belongs to the motilin family. O-octanoylated by GOAT/MBOAT4. O-octanoylation is essential for ghrelin activity. The replacement of Ser-26 by aromatic tryptophan preserves ghrelin activity. In terms of processing, amidation of Leu-98 is essential for obestatin activity. As to expression, ghrelin is broadly expressed with higher expression in the stomach. Very low levels are detected in the hypothalamus, heart, lung, pancreas, intestine and adipose tissue. Obestatin is most highly expressed in jejunum, and also found in duodenum, stomach, pituitary, ileum, liver, hypothalamus and heart. Expressed in low levels in pancreas, cerebellum, cerebrum, kidney, testis, ovary colon and lung.

It localises to the secreted. Functionally, ghrelin is the ligand for growth hormone secretagogue receptor type 1 (GHSR). Induces the release of growth hormone from the pituitary. Has an appetite-stimulating effect, induces adiposity and stimulates gastric acid secretion. Involved in growth regulation. Its function is as follows. Obestatin may be the ligand for GPR39. May have an appetite-reducing effect resulting in decreased food intake. May reduce gastric emptying activity and jejunal motility. This chain is Appetite-regulating hormone (Ghrl), found in Rattus norvegicus (Rat).